The sequence spans 559 residues: Acetolactate synthase, catabolic (559 aa).

FAD-binding positions include arginine 159, 263–284 (FNNQ…IGYS), and 304–323 (DVLP…LVGD). Mg(2+) is bound at residue aspartate 447.

It belongs to the TPP enzyme family. Homodimer.

The enzyme catalyses 2 pyruvate + H(+) = (2S)-2-acetolactate + CO2. It participates in polyol metabolism; (R,R)-butane-2,3-diol biosynthesis; (R,R)-butane-2,3-diol from pyruvate: step 1/3. This Raoultella terrigena (Klebsiella terrigena) protein is Acetolactate synthase, catabolic (budB).